A 461-amino-acid chain; its full sequence is Probable carboxypeptidase MGYG_04702 (461 aa).

Residues 1–20 (MQKTYLLALVSLLASSLVEA) form the signal peptide. 2 N-linked (GlcNAc...) asparagine glycosylation sites follow: N48 and N99. D176 is a binding site for Zn(2+). E208 (proton acceptor) is an active-site residue. E209 lines the Zn(2+) pocket. An N-linked (GlcNAc...) asparagine glycan is attached at N396.

It belongs to the peptidase M20A family. Zn(2+) is required as a cofactor.

It localises to the secreted. The protein is Probable carboxypeptidase MGYG_04702 of Arthroderma gypseum (strain ATCC MYA-4604 / CBS 118893) (Microsporum gypseum).